A 241-amino-acid chain; its full sequence is Sec-independent protein translocase protein TatC (241 aa).

6 helical membrane passes run 27–47, 76–96, 122–142, 161–181, 193–213, and 217–237; these read LIIV…FSAG, LTMC…YEAF, FVAG…SIVI, IVTN…IIVL, LVKG…FFSP, and LFSQ…SMVL.

It belongs to the TatC family. In terms of assembly, forms a complex with TatA.

The protein resides in the cell membrane. Part of the twin-arginine translocation (Tat) system that transports large folded proteins containing a characteristic twin-arginine motif in their signal peptide across membranes. This is Sec-independent protein translocase protein TatC from Methanocella arvoryzae (strain DSM 22066 / NBRC 105507 / MRE50).